The sequence spans 195 residues: Phosphoheptose isomerase (195 aa).

Positions 36-195 constitute an SIS domain; sequence VSKVLQSGNT…IVEYNLFKME (160 aa). 51-53 contributes to the substrate binding site; the sequence is NGG. Zn(2+)-binding residues include His-60 and Glu-64. Substrate is bound by residues Glu-64, 95–96, 121–123, Ser-126, and Gln-173; these read ND and STS. Residues Gln-173 and His-181 each contribute to the Zn(2+) site.

Belongs to the SIS family. GmhA subfamily. The cofactor is Zn(2+).

The protein resides in the cytoplasm. The catalysed reaction is 2 D-sedoheptulose 7-phosphate = D-glycero-alpha-D-manno-heptose 7-phosphate + D-glycero-beta-D-manno-heptose 7-phosphate. The protein operates within carbohydrate biosynthesis; D-glycero-D-manno-heptose 7-phosphate biosynthesis; D-glycero-alpha-D-manno-heptose 7-phosphate and D-glycero-beta-D-manno-heptose 7-phosphate from sedoheptulose 7-phosphate: step 1/1. Catalyzes the isomerization of sedoheptulose 7-phosphate in D-glycero-D-manno-heptose 7-phosphate. The sequence is that of Phosphoheptose isomerase from Leptospira borgpetersenii serovar Hardjo-bovis (strain JB197).